Here is a 56-residue protein sequence, read N- to C-terminus: Cytochrome b-c1 complex subunit 10 (56 aa).

At 1–12 the chain is on the mitochondrial matrix side; the sequence is MVTRFLGPRYRE. The helical transmembrane segment at 13-35 threads the bilayer; the sequence is LVKNWVPTAYTWGAVGAVGLVWA. At 36–56 the chain is on the mitochondrial intermembrane side; that stretch reads TDWRLILDWVPYINGKFKKDN.

This sequence belongs to the UQCR11/QCR10 family. Component of the ubiquinol-cytochrome c oxidoreductase (cytochrome b-c1 complex, complex III, CIII), a multisubunit enzyme composed of 11 subunits. The complex is composed of 3 respiratory subunits cytochrome b, cytochrome c1 and Rieske protein UQCRFS1, 2 core protein subunits UQCRC1/QCR1 and UQCRC2/QCR2, and 6 low-molecular weight protein subunits UQCRH/QCR6, UQCRB/QCR7, UQCRQ/QCR8, UQCR10/QCR9, UQCR11/QCR10 and subunit 9, the cleavage product of Rieske protein UQCRFS1. The complex exists as an obligatory dimer and forms supercomplexes (SCs) in the inner mitochondrial membrane with NADH-ubiquinone oxidoreductase (complex I, CI) and cytochrome c oxidase (complex IV, CIV), resulting in different assemblies (supercomplex SCI(1)III(2)IV(1) and megacomplex MCI(2)III(2)IV(2)).

It localises to the mitochondrion inner membrane. In terms of biological role, component of the ubiquinol-cytochrome c oxidoreductase, a multisubunit transmembrane complex that is part of the mitochondrial electron transport chain which drives oxidative phosphorylation. The respiratory chain contains 3 multisubunit complexes succinate dehydrogenase (complex II, CII), ubiquinol-cytochrome c oxidoreductase (cytochrome b-c1 complex, complex III, CIII) and cytochrome c oxidase (complex IV, CIV), that cooperate to transfer electrons derived from NADH and succinate to molecular oxygen, creating an electrochemical gradient over the inner membrane that drives transmembrane transport and the ATP synthase. The cytochrome b-c1 complex catalyzes electron transfer from ubiquinol to cytochrome c, linking this redox reaction to translocation of protons across the mitochondrial inner membrane, with protons being carried across the membrane as hydrogens on the quinol. In the process called Q cycle, 2 protons are consumed from the matrix, 4 protons are released into the intermembrane space and 2 electrons are passed to cytochrome c. QCR10 has a role in CIII assembly and RIP1 stability. The chain is Cytochrome b-c1 complex subunit 10 (UQCR11) from Homo sapiens (Human).